The following is a 394-amino-acid chain: Argininosuccinate synthase (394 aa).

Position 8–16 (8–16) interacts with ATP; sequence AYSGGLDTS. Residues Tyr-86 and Ser-91 each contribute to the L-citrulline site. An ATP-binding site is contributed by Gly-116. L-aspartate-binding residues include Thr-118, Asn-122, and Asp-123. Asn-122 lines the L-citrulline pocket. Arg-126, Ser-172, Ser-181, Glu-257, and Tyr-269 together coordinate L-citrulline.

It belongs to the argininosuccinate synthase family. Type 1 subfamily. As to quaternary structure, homotetramer.

It is found in the cytoplasm. It catalyses the reaction L-citrulline + L-aspartate + ATP = 2-(N(omega)-L-arginino)succinate + AMP + diphosphate + H(+). It functions in the pathway amino-acid biosynthesis; L-arginine biosynthesis; L-arginine from L-ornithine and carbamoyl phosphate: step 2/3. This is Argininosuccinate synthase from Methanosarcina mazei (strain ATCC BAA-159 / DSM 3647 / Goe1 / Go1 / JCM 11833 / OCM 88) (Methanosarcina frisia).